A 352-amino-acid polypeptide reads, in one-letter code: 7,8-didemethyl-8-hydroxy-5-deazariboflavin synthase (352 aa).

A Radical SAM core domain is found at 35 to 275 (ITFSKNAFIP…EGISIQVPPN (241 aa)). C49, C53, and C56 together coordinate [4Fe-4S] cluster.

Belongs to the radical SAM superfamily. CofG family. In terms of assembly, consists of two subunits, CofG and CofH. The cofactor is [4Fe-4S] cluster.

It catalyses the reaction 5-amino-5-(4-hydroxybenzyl)-6-(D-ribitylimino)-5,6-dihydrouracil + S-adenosyl-L-methionine = 7,8-didemethyl-8-hydroxy-5-deazariboflavin + 5'-deoxyadenosine + L-methionine + NH4(+) + H(+). It participates in cofactor biosynthesis; coenzyme F0 biosynthesis. Functionally, catalyzes the radical-mediated synthesis of 7,8-didemethyl-8-hydroxy-5-deazariboflavin from 5-amino-5-(4-hydroxybenzyl)-6-(D-ribitylimino)-5,6-dihydrouracil. This is 7,8-didemethyl-8-hydroxy-5-deazariboflavin synthase from Methanococcus maripaludis (strain C5 / ATCC BAA-1333).